An 826-amino-acid polypeptide reads, in one-letter code: Lysine-specific histone demethylase 1B (826 aa).

Positions Met1–Arg11 are enriched in basic residues. The tract at residues Met1–Ser46 is disordered. 2 positions are modified to phosphoserine: Ser17 and Ser26. Zn(2+) is bound by residues Cys53, Cys58, Cys65, Cys73, His84, His90, Cys92, Cys95, Cys142, Cys147, Cys169, and Cys185. Residues Asp133 to Val193 form a CW-type zinc finger. Ser253 carries the post-translational modification Phosphoserine. Positions Tyr279–Asp298 are GLYR1-binding. Residues Pro281–Gln379 enclose the SWIRM domain. Residue Lys389–Val445 participates in FAD binding. Histone H3-binding regions lie at residues Ile444–Leu473, Phe493–Arg504, and Phe544–His578. The segment at Phe570–Ala572 is GLYR1-binding. FAD contacts are provided by residues Val604, Glu799, and Gln807–Val809. The segment at Asn802–Arg818 is GLYR1-binding.

Belongs to the flavin monoamine oxidase family. Interacts with its cofactor GLYR1 at nucleosomes; this interaction stimulates H3K4me1 and H3K4me2 demethylation. In contrast to KDM1A, does not form a complex with RCOR1/CoREST. Possible accessory component of the polycomb repressive deubiquitinase (PR-DUB) complex, at least composed of BAP1, one of ASXL1, ASXL2 or (probably) ASXL3 and one of MBD5 or MBD6. The PR-DUB core associates with a number of accessory proteins, including FOXK1, FOXK2, KDM1B, HCFC1 and OGT; KDM1B specifically associates with ASXL2 PR-DUB complexes. FAD is required as a cofactor. Zn(2+) serves as cofactor. In terms of tissue distribution, expressed in growing oocytes and in intestinal gland.

Its subcellular location is the nucleus. It localises to the chromosome. It catalyses the reaction N(6),N(6)-dimethyl-L-lysyl(4)-[histone H3] + 2 A + 2 H2O = L-lysyl(4)-[histone H3] + 2 formaldehyde + 2 AH2. The enzyme catalyses N(6)-methyl-L-lysyl(4)-[histone H3] + A + H2O = L-lysyl(4)-[histone H3] + formaldehyde + AH2. Inhibited by tranylcypromine, but not by pargyline, deprenyl or rasagiline. Histone H3K4me1 and H3K4me2 demethylase activity is inhibited by DNA, this inhibition is released in complex with GLYR1. Histone demethylase that demethylates 'Lys-4' of histone H3, a specific tag for epigenetic transcriptional activation, thereby acting as a corepressor. Required for de novo DNA methylation of a subset of imprinted genes during oogenesis. Acts by oxidizing the substrate by FAD to generate the corresponding imine that is subsequently hydrolyzed. Demethylates both mono- and di-methylated 'Lys-4' of histone H3. Has no effect on tri-methylated 'Lys-4', mono-, di- or tri-methylated 'Lys-9', mono-, di- or tri-methylated 'Lys-27', mono-, di- or tri-methylated 'Lys-36' of histone H3, or on mono-, di- or tri-methylated 'Lys-20' of histone H4. Functionally, histone demethylase that demethylates 'Lys-4' of histone H3, a specific tag for epigenetic transcriptional activation, thereby acting as a corepressor. Required for de novo DNA methylation of a subset of imprinted genes during oogenesis. Acts by oxidizing the substrate by FAD to generate the corresponding imine that is subsequently hydrolyzed. Demethylates both mono- and di-methylated 'Lys-4' of histone H3. Has no effect on tri-methylated 'Lys-4', mono-, di- or tri-methylated 'Lys-9', mono-, di- or tri-methylated 'Lys-27', mono-, di- or tri-methylated 'Lys-36' of histone H3, or on mono-, di- or tri-methylated 'Lys-20' of histone H4. Alone, it is unable to demethylate H3K4me on nucleosomes and requires the presence of GLYR1 to achieve such activity, they form a multifunctional enzyme complex that modifies transcribed chromatin and facilitates Pol II transcription through nucleosomes. This is Lysine-specific histone demethylase 1B from Mus musculus (Mouse).